A 660-amino-acid polypeptide reads, in one-letter code: DNA mismatch repair protein MutL (660 aa).

It belongs to the DNA mismatch repair MutL/HexB family.

Functionally, this protein is involved in the repair of mismatches in DNA. It is required for dam-dependent methyl-directed DNA mismatch repair. May act as a 'molecular matchmaker', a protein that promotes the formation of a stable complex between two or more DNA-binding proteins in an ATP-dependent manner without itself being part of a final effector complex. This Streptococcus pyogenes serotype M1 protein is DNA mismatch repair protein MutL.